Here is a 240-residue protein sequence, read N- to C-terminus: MSAPLSLFVTGTDTEIGKTFVSAALLHGFARAGLRAAAMKPVAAGAYERDGAWRNEDADQLDAAANVALPAAIRTPFLLKAPAAPHIVAAREGVALDIGTIVDAHRRACEMADVIVVEGVGGFRVPLADTRDTADLAVALGLPVVLVVGVRLGCISHALLTAEAIAARGLPLAGWVANRIDPAMPFADDNIDTLRAWLEREHRAPLLGALAHMSPPSPDAASHALDVNLLLNALRAAAPR.

Glu-15–Phe-20 contributes to the ATP binding site. Mg(2+) is bound at residue Thr-19. Lys-40 is an active-site residue. Residues Asp-57, Glu-118–Gly-121, and Asn-178–Arg-179 contribute to the ATP site. Residues Asp-57 and Glu-118 each coordinate Mg(2+).

Belongs to the dethiobiotin synthetase family. As to quaternary structure, homodimer. It depends on Mg(2+) as a cofactor.

The protein localises to the cytoplasm. The enzyme catalyses (7R,8S)-7,8-diammoniononanoate + CO2 + ATP = (4R,5S)-dethiobiotin + ADP + phosphate + 3 H(+). Its pathway is cofactor biosynthesis; biotin biosynthesis; biotin from 7,8-diaminononanoate: step 1/2. Catalyzes a mechanistically unusual reaction, the ATP-dependent insertion of CO2 between the N7 and N8 nitrogen atoms of 7,8-diaminopelargonic acid (DAPA, also called 7,8-diammoniononanoate) to form a ureido ring. This chain is ATP-dependent dethiobiotin synthetase BioD, found in Burkholderia pseudomallei (strain K96243).